The following is a 391-amino-acid chain: Chorismate synthase (391 aa).

Arg48 serves as a coordination point for NADP(+). FMN-binding positions include 126 to 128, Gly287, 302 to 306, and Arg329; these read RSS and KPTSS.

This sequence belongs to the chorismate synthase family. It depends on FMNH2 as a cofactor.

The enzyme catalyses 5-O-(1-carboxyvinyl)-3-phosphoshikimate = chorismate + phosphate. It participates in metabolic intermediate biosynthesis; chorismate biosynthesis; chorismate from D-erythrose 4-phosphate and phosphoenolpyruvate: step 7/7. In terms of biological role, catalyzes the anti-1,4-elimination of the C-3 phosphate and the C-6 proR hydrogen from 5-enolpyruvylshikimate-3-phosphate (EPSP) to yield chorismate, which is the branch point compound that serves as the starting substrate for the three terminal pathways of aromatic amino acid biosynthesis. This reaction introduces a second double bond into the aromatic ring system. The chain is Chorismate synthase from Sulfolobus acidocaldarius (strain ATCC 33909 / DSM 639 / JCM 8929 / NBRC 15157 / NCIMB 11770).